We begin with the raw amino-acid sequence, 759 residues long: Catalase-peroxidase (759 aa).

The segment at 1 to 24 (MTQDKCPFKEQSSQPNFAGGGTSN) is disordered. Positions 96–242 (WHSAGTYRVF…LAAAHMGLIY (147 aa)) form a cross-link, tryptophyl-tyrosyl-methioninium (Trp-Tyr) (with M-268). His97 functions as the Proton acceptor in the catalytic mechanism. Residues 242 to 268 (YVNPEGPDGNPDPVAAAHDIRDTFGRM) constitute a cross-link (tryptophyl-tyrosyl-methioninium (Tyr-Met) (with W-96)). His283 serves as a coordination point for heme b.

It belongs to the peroxidase family. Peroxidase/catalase subfamily. As to quaternary structure, homodimer or homotetramer. Requires heme b as cofactor. Formation of the three residue Trp-Tyr-Met cross-link is important for the catalase, but not the peroxidase activity of the enzyme.

The protein localises to the cytoplasm. The enzyme catalyses H2O2 + AH2 = A + 2 H2O. It catalyses the reaction 2 H2O2 = O2 + 2 H2O. Its function is as follows. Bifunctional enzyme with both catalase and broad-spectrum peroxidase activity. In Aspergillus fumigatus (strain CBS 144.89 / FGSC A1163 / CEA10) (Neosartorya fumigata), this protein is Catalase-peroxidase.